The chain runs to 151 residues: Ribonuclease H (151 aa).

One can recognise an RNase H type-1 domain in the interval 1–141 (MKNVIIYTDG…ADALANRGID (141 aa)). Residues Asp-9, Glu-47, Asp-69, and Asp-133 each contribute to the Mg(2+) site.

This sequence belongs to the RNase H family. As to quaternary structure, monomer. Mg(2+) serves as cofactor.

The protein resides in the cytoplasm. The catalysed reaction is Endonucleolytic cleavage to 5'-phosphomonoester.. In terms of biological role, endonuclease that specifically degrades the RNA of RNA-DNA hybrids. The polypeptide is Ribonuclease H (Alcanivorax borkumensis (strain ATCC 700651 / DSM 11573 / NCIMB 13689 / SK2)).